We begin with the raw amino-acid sequence, 674 residues long: DNA ligase (674 aa).

NAD(+)-binding positions include 35–39 (DAEYD), 84–85 (SL), and E116. The active-site N6-AMP-lysine intermediate is the K118. Residues R139, E176, K293, and K317 each contribute to the NAD(+) site. C411, C414, C429, and C435 together coordinate Zn(2+). One can recognise a BRCT domain in the interval 593–674 (DGVKPLEGTT…LLALLEEHGV (82 aa)).

The protein belongs to the NAD-dependent DNA ligase family. LigA subfamily. The cofactor is Mg(2+). Mn(2+) serves as cofactor.

It carries out the reaction NAD(+) + (deoxyribonucleotide)n-3'-hydroxyl + 5'-phospho-(deoxyribonucleotide)m = (deoxyribonucleotide)n+m + AMP + beta-nicotinamide D-nucleotide.. Functionally, DNA ligase that catalyzes the formation of phosphodiester linkages between 5'-phosphoryl and 3'-hydroxyl groups in double-stranded DNA using NAD as a coenzyme and as the energy source for the reaction. It is essential for DNA replication and repair of damaged DNA. The chain is DNA ligase from Saccharophagus degradans (strain 2-40 / ATCC 43961 / DSM 17024).